A 352-amino-acid chain; its full sequence is Very-long-chain 3-oxoacyl-CoA reductase (352 aa).

Residues 20 to 40 (TLWFIFIFGLLKLVPFALRFL) traverse the membrane as a helical segment. Positions 66, 120, 147, 228, 232, 261, and 263 each coordinate NADP(+). Residue Tyr-228 is the Proton donor of the active site. Lys-232 serves as the catalytic Lowers pKa of active site Tyr.

It belongs to the short-chain dehydrogenases/reductases (SDR) family.

The protein resides in the endoplasmic reticulum membrane. The catalysed reaction is a very-long-chain (3R)-3-hydroxyacyl-CoA + NADP(+) = a very-long-chain 3-oxoacyl-CoA + NADPH + H(+). It functions in the pathway lipid metabolism; fatty acid biosynthesis. In terms of biological role, component of the microsomal membrane bound fatty acid elongation system, which produces the 26-carbon very long-chain fatty acids (VLCFA) from palmitate. Catalyzes the reduction of the 3-ketoacyl-CoA intermediate that is formed in each cycle of fatty acid elongation. VLCFAs serve as precursors for ceramide and sphingolipids. The sequence is that of Very-long-chain 3-oxoacyl-CoA reductase from Candida glabrata (strain ATCC 2001 / BCRC 20586 / JCM 3761 / NBRC 0622 / NRRL Y-65 / CBS 138) (Yeast).